Consider the following 334-residue polypeptide: Meso-diaminopimelate D-dehydrogenase (334 aa).

NADP(+)-binding positions include 16 to 19 (YGNL), 40 to 42 (TRR), 75 to 78 (CSGS), 98 to 100 (GFD), and 127 to 131 (CGWDP). Residues Asp-100, Asp-130, Trp-154, 160-161 (QG), Thr-179, Arg-205, His-255, and Asn-284 contribute to the substrate site.

It belongs to the diaminopimelate dehydrogenase family. In terms of assembly, homodimer.

It carries out the reaction meso-2,6-diaminopimelate + NADP(+) + H2O = (S)-2-amino-6-oxoheptanedioate + NH4(+) + NADPH + H(+). Its pathway is amino-acid biosynthesis; L-lysine biosynthesis via DAP pathway; DL-2,6-diaminopimelate from (S)-tetrahydrodipicolinate: step 1/1. Its function is as follows. Catalyzes the reversible NADPH-dependent reductive amination of L-2-amino-6-oxopimelate, the acyclic form of L-tetrahydrodipicolinate, to generate the meso compound, D,L-2,6-diaminopimelate. Probably plays a role in lysine biosynthesis. Exhibits a high substrate specificity for meso-2,6-diaminopimelate (m-DAP), since the activity with L,L-2,6-diaminopimelate is less than 5% of the activity observed with m-DAP. Can use NAD(+) only very poorly since the activity observed in the presence of NAD(+) is about 0.3% of that with NADP(+). This is Meso-diaminopimelate D-dehydrogenase (ddh) from Acetivibrio thermocellus (strain ATCC 27405 / DSM 1237 / JCM 9322 / NBRC 103400 / NCIMB 10682 / NRRL B-4536 / VPI 7372) (Clostridium thermocellum).